The primary structure comprises 223 residues: MNESIFPHWNSDQAITFLKEWNFSLGVILLLITIILQFGYTSRSMFVYLIKMIILWLMWPLTIILTIFNCFYALNNIFLGLSILFTIISIVIWILYFVNSIRLFIRTGSWWSFNPETNNLMCIDMKGKMYVRPVIEDYHTLTATVIRGHLYIQGVKLGTGYTLADLPVYVTVAKVQVLCTYKRAFLDKLDVNSGFAVFVKSKVGNYRLPSSKSSGMDTALLRA.

Over 1–20 (MNESIFPHWNSDQAITFLKE) the chain is Virion surface. A helical transmembrane segment spans residues 21–41 (WNFSLGVILLLITIILQFGYT). The Intravirion portion of the chain corresponds to 42-51 (SRSMFVYLIK). The chain crosses the membrane as a helical span at residues 52 to 72 (MIILWLMWPLTIILTIFNCFY). Topologically, residues 73–80 (ALNNIFLG) are virion surface. The helical transmembrane segment at 81–101 (LSILFTIISIVIWILYFVNSI) threads the bilayer. The Intravirion segment spans residues 102-223 (RLFIRTGSWW…SGMDTALLRA (122 aa)).

It belongs to the betacoronaviruses M protein family. In terms of assembly, homomultimer. Interacts with envelope E protein in the budding compartment of the host cell, which is located between endoplasmic reticulum and the Golgi complex. Forms a complex with HE and S proteins. Interacts with nucleocapsid N protein. This interaction probably participates in RNA packaging into the virus.

Its subcellular location is the virion membrane. It is found in the host Golgi apparatus membrane. Functionally, component of the viral envelope that plays a central role in virus morphogenesis and assembly via its interactions with other viral proteins. The protein is Membrane protein of Homo sapiens (Human).